Reading from the N-terminus, the 383-residue chain is ATP phosphoribosyltransferase regulatory subunit (383 aa).

Belongs to the class-II aminoacyl-tRNA synthetase family. HisZ subfamily. In terms of assembly, heteromultimer composed of HisG and HisZ subunits.

Its subcellular location is the cytoplasm. It participates in amino-acid biosynthesis; L-histidine biosynthesis; L-histidine from 5-phospho-alpha-D-ribose 1-diphosphate: step 1/9. In terms of biological role, required for the first step of histidine biosynthesis. May allow the feedback regulation of ATP phosphoribosyltransferase activity by histidine. In Neisseria meningitidis serogroup C / serotype 2a (strain ATCC 700532 / DSM 15464 / FAM18), this protein is ATP phosphoribosyltransferase regulatory subunit.